A 797-amino-acid chain; its full sequence is Sodium/hydrogen exchanger 4 (797 aa).

Over 1–13 (MGPAMFMAFRLWN) the chain is Cytoplasmic. Residues 14–28 (WLLLLAVLTRSEATS) constitute an intramembrane region (name=A/M1). Topologically, residues 29 to 69 (YVNESSNPTAQQAPDARFAASSSDPDEGISVFELDYDYVQI) are cytoplasmic. The disordered stretch occupies residues 32-52 (ESSNPTAQQAPDARFAASSSD). An intramembrane region (name=B/M2) is located at residues 70–90 (PYEVTLWILLASLAKIGFHLY). Over 91-94 (HRLP) the chain is Cytoplasmic. The chain crosses the membrane as a helical span at residues 95-114 (HLMPESCLLIIVGALVGGII). Residues 115-127 (FGTHHKSPPVMDS) lie on the Extracellular side of the membrane. Residues 128–148 (SIYFLYLLPPIVLESGYFMPT) traverse the membrane as a helical segment. Residues 149-154 (RPFFEN) are Cytoplasmic-facing. The helical transmembrane segment at 155–175 (IGSILWWAGLGALINAFGIGL) threads the bilayer. Topologically, residues 176–194 (SLYFICQIKAFGLGDINLL) are extracellular. A helical transmembrane segment spans residues 195-215 (HNLLFGSLISAVDPVAVLAVF). Residues 216-226 (EEARVNEQLYM) lie on the Cytoplasmic side of the membrane. Residues 227 to 247 (MIFGEALLNDGISVVLYNILI) form a helical membrane-spanning segment. Over 248 to 270 (AFTKMHKFEDIEAVDILAGCARF) the chain is Extracellular. A helical membrane pass occupies residues 271–291 (VIVGCGGVFFGIIFGFISAFI). Topologically, residues 292 to 304 (TRFTQNISAIEPL) are cytoplasmic. The chain crosses the membrane as a helical span at residues 305–325 (IVFMFSYLSYLAAETLYLSGI). The Extracellular portion of the chain corresponds to 326 to 352 (LAITACAVTMKKYVEENVSQTSYTTIK). Asparagine 342 is a glycosylation site (N-linked (GlcNAc...) asparagine). A helical transmembrane segment spans residues 353–373 (YFMKMLSSVSETLIFIFMGVS). At 374–384 (TIGKNHEWNWA) the chain is on the cytoplasmic side. A helical membrane pass occupies residues 385–405 (FICFTLLFCQIWRAISVFTLF). Residues 406–420 (YVSNQFRTFPFSIKD) are Extracellular-facing. Positions 421–441 (QFIIFYSGVRGAGSFSLAFLL) form an intramembrane region, name=L. The Extracellular segment spans residues 442 to 450 (PLSLFPRKK). A helical transmembrane segment spans residues 451–471 (LFVTATLVVTYFTVFFQGITI). Residues 472–797 (GPLVRYLDVR…KSHSPLLHRK (326 aa)) lie on the Cytoplasmic side of the membrane. Over residues 759-769 (YDSGEQTEEET) the composition is skewed to acidic residues. The disordered stretch occupies residues 759 to 797 (YDSGEQTEEETSAILSRWTAEHRHSTEHHKSHSPLLHRK). Over residues 783 to 797 (STEHHKSHSPLLHRK) the composition is skewed to basic residues.

This sequence belongs to the monovalent cation:proton antiporter 1 (CPA1) transporter (TC 2.A.36) family. In terms of assembly, homodimer; each protomer has one site for sodium and one site for proton binding. Interacts with CHP1 and CHP2. Post-translationally, may be phosphorylated. In terms of tissue distribution, expressed in kidney. Expressed in uterus and endometrial epithelial cells. Expressed in the inner segments of inner medullary collecting ducts (IMCD) in kidney. Expressed in AGTR1-positive neurons in organum vasculosum of the lamina terminalis (at protein level).

The protein localises to the basolateral cell membrane. It is found in the apical cell membrane. The protein resides in the zymogen granule membrane. It carries out the reaction Na(+)(in) + H(+)(out) = Na(+)(out) + H(+)(in). The enzyme catalyses Na(+)(out) + NH4(+)(in) = Na(+)(in) + NH4(+)(out). With respect to regulation, up-regulated in response to high extracellular sodium concentration. Electroneutral antiporter that exchanges sodium for protons or ammonium ions at the basolateral membrane of epithelia to regulate cell volume and intracellular pH upon hypertonic conditions. As part of transcellular ammonia transport in renal tubules, mediates basolateral ammonium extrusion in the medullary thick ascending limb, regulating the corticopapillary ammonium gradient and overall renal acid excretion. Mediates sodium:proton exchange in gastric parietal cells secondary to cAMP-dependent acid secretion and hyperosmolarity. Possibly coupled to chloride:bicarbonate antiporter, enables loading of parietal cells with sodium and chloride ions to maintain cell volume and normal gastric acid secretion. Functions as a sodium sensor in neurons of organum vasculosum of the lamina terminalis where it regulates water intake in response to increased sodium concentration in body fluids. The chain is Sodium/hydrogen exchanger 4 (Slc9a4) from Mus musculus (Mouse).